The chain runs to 144 residues: Large ribosomal subunit protein uL15 (144 aa).

The interval 1 to 48 (MIKLESLQDPSPRKRRTKLLGRGPSSGHGKTSCRGHKGDGSRSGYKRR) is disordered.

Belongs to the universal ribosomal protein uL15 family. Part of the 50S ribosomal subunit.

Its function is as follows. Binds to the 23S rRNA. This Chlamydia abortus (strain DSM 27085 / S26/3) (Chlamydophila abortus) protein is Large ribosomal subunit protein uL15.